Reading from the N-terminus, the 83-residue chain is Neurotoxin LmNaTx3 (83 aa).

Residues 1–21 (MQLKIQLLMLVLMIVLTDVYS) form the signal peptide. Residues 22–83 (KDGFIVSKKN…NIAMKNKNYC (62 aa)) enclose the LCN-type CS-alpha/beta domain. Intrachain disulfides connect cysteine 32–cysteine 83, cysteine 36–cysteine 59, cysteine 45–cysteine 64, and cysteine 49–cysteine 66.

This sequence belongs to the long (4 C-C) scorpion toxin superfamily. Sodium channel inhibitor family. Alpha subfamily. In terms of tissue distribution, expressed by the venom gland.

The protein resides in the secreted. Its function is as follows. Binds voltage-independently at site-3 of voltage-gated sodium channels (Nav) and inhibits the inactivation of the activated channels, thereby blocking neuronal transmission. This is Neurotoxin LmNaTx3 from Lychas mucronatus (Chinese swimming scorpion).